A 669-amino-acid chain; its full sequence is DNA mismatch repair protein MutL (669 aa).

The span at 356-371 (FEQRQNTENKQEKTFS) shows a compositional bias: basic and acidic residues. Positions 356 to 379 (FEQRQNTENKQEKTFSSEESNSKP) are disordered.

This sequence belongs to the DNA mismatch repair MutL/HexB family.

This protein is involved in the repair of mismatches in DNA. It is required for dam-dependent methyl-directed DNA mismatch repair. May act as a 'molecular matchmaker', a protein that promotes the formation of a stable complex between two or more DNA-binding proteins in an ATP-dependent manner without itself being part of a final effector complex. The chain is DNA mismatch repair protein MutL from Staphylococcus aureus (strain MRSA252).